The primary structure comprises 275 residues: Phosphonoacetaldehyde hydrolase (275 aa).

The Nucleophile role is filled by D15. D15 and A17 together coordinate Mg(2+). The Schiff-base intermediate with substrate role is filled by K56. D189 is a binding site for Mg(2+).

This sequence belongs to the HAD-like hydrolase superfamily. PhnX family. Homodimer. The cofactor is Mg(2+).

It carries out the reaction phosphonoacetaldehyde + H2O = acetaldehyde + phosphate + H(+). Functionally, involved in phosphonate degradation. This Pseudomonas putida (strain ATCC 700007 / DSM 6899 / JCM 31910 / BCRC 17059 / LMG 24140 / F1) protein is Phosphonoacetaldehyde hydrolase.